The primary structure comprises 449 residues: UDP-N-acetylmuramoylalanine--D-glutamate ligase (449 aa).

ATP is bound at residue 118–124 (GTNGKTT).

This sequence belongs to the MurCDEF family.

The protein localises to the cytoplasm. It catalyses the reaction UDP-N-acetyl-alpha-D-muramoyl-L-alanine + D-glutamate + ATP = UDP-N-acetyl-alpha-D-muramoyl-L-alanyl-D-glutamate + ADP + phosphate + H(+). It participates in cell wall biogenesis; peptidoglycan biosynthesis. In terms of biological role, cell wall formation. Catalyzes the addition of glutamate to the nucleotide precursor UDP-N-acetylmuramoyl-L-alanine (UMA). In Staphylococcus epidermidis (strain ATCC 35984 / DSM 28319 / BCRC 17069 / CCUG 31568 / BM 3577 / RP62A), this protein is UDP-N-acetylmuramoylalanine--D-glutamate ligase.